Consider the following 368-residue polypeptide: tRNA-specific 2-thiouridylase MnmA (368 aa).

Residues 11–18 (GMSGGVDS) and methionine 37 each bind ATP. The segment at 97 to 99 (NPD) is interaction with target base in tRNA. The Nucleophile role is filled by cysteine 102. Residues cysteine 102 and cysteine 199 are joined by a disulfide bond. Glycine 127 serves as a coordination point for ATP. The segment at 149–151 (KDQ) is interaction with tRNA. Cysteine 199 acts as the Cysteine persulfide intermediate in catalysis. The interaction with tRNA stretch occupies residues 311–312 (RY).

This sequence belongs to the MnmA/TRMU family. As to quaternary structure, interacts with TusE.

It localises to the cytoplasm. It catalyses the reaction S-sulfanyl-L-cysteinyl-[protein] + uridine(34) in tRNA + AH2 + ATP = 2-thiouridine(34) in tRNA + L-cysteinyl-[protein] + A + AMP + diphosphate + H(+). In terms of biological role, catalyzes the 2-thiolation of uridine at the wobble position (U34) of tRNA(Lys), tRNA(Glu) and tRNA(Gln), leading to the formation of s(2)U34, the first step of tRNA-mnm(5)s(2)U34 synthesis. Sulfur is provided by IscS, via a sulfur-relay system. Binds ATP and its substrate tRNAs. The polypeptide is tRNA-specific 2-thiouridylase MnmA (Escherichia coli O139:H28 (strain E24377A / ETEC)).